The chain runs to 107 residues: MQTDTSNLSARSCRFCVMSPLRTLLRSSEMRRKLLAVSASKVISTVKRKTSCSASGQKPTPCLSSTSKAQISPDFSFFNSVSSSKIKTFHEETSLFQIFIGMLCGNT.

As to expression, strongly expressed in the testis and weakly in brain, placenta and pancreas.

This is Putative protein RFPL3S (RFPL3S) from Homo sapiens (Human).